Consider the following 284-residue polypeptide: TM2 domain-containing protein almondex (284 aa).

The N-terminal stretch at 1 to 32 (MRLQRQCIVVNMRSAIVLIMIFVLTGIRNSET) is a signal peptide. A disordered region spans residues 33–63 (ASGGNQMDLSDSKGDHKDNSNASNGNGNAND). Residues 33–225 (ASGGNQMDLS…NWTQGYRWST (193 aa)) lie on the Extracellular side of the membrane. The span at 42–51 (SDSKGDHKDN) shows a compositional bias: basic and acidic residues. Residues 52 to 63 (SNASNGNGNAND) show a composition bias toward low complexity. Residues Asn-53, Asn-89, Asn-141, Asn-194, Asn-206, and Asn-216 are each glycosylated (N-linked (GlcNAc...) asparagine). The region spanning 220–267 (GYRWSTALLISLTLGGFGADRFYLGHWQEGIGKLFSFGGLGVWTIIDV) is the TM2 domain. A helical transmembrane segment spans residues 226-246 (ALLISLTLGGFGADRFYLGHW). The Cytoplasmic portion of the chain corresponds to 247–249 (QEG). The chain crosses the membrane as a helical span at residues 250-270 (IGKLFSFGGLGVWTIIDVLLI). Over 271–284 (SMHYLGPADGSLYI) the chain is Extracellular.

Belongs to the TM2 family. In terms of tissue distribution, expressed in female ovary, mainly in nurse cells (at protein level). Expressed in the brain at low levels (at protein level).

The protein resides in the membrane. It localises to the vesicle. Its function is as follows. Positive regulator of Notch signaling during lateral inhibition and boundary formation. Interacts with Notch signaling at the membrane, at the level of gamma-secretase-mediated S3 cleavage. May regulate Notch signaling by regulating the subcellular localization of N/Notch in a context dependent manner. Maternal neurogenic factor involved in Notch signaling-dependent mesectodermal and neuroectodermal specification during early embryogenesis. Functions cooperatively with bisc/TM2D1 and amrt/TM2D2. Required for maintenance of neuronal function. Involved in imaginal specification of eyes and wings. The protein is TM2 domain-containing protein almondex of Drosophila melanogaster (Fruit fly).